The sequence spans 403 residues: Phosphoglycerate kinase (403 aa).

Substrate is bound by residues 24–26 (DLN), Arg39, 62–65 (HLGR), Arg121, and Arg161. Residues Lys211, Gly299, Glu330, and 359-362 (GGDS) contribute to the ATP site.

The protein belongs to the phosphoglycerate kinase family. In terms of assembly, monomer.

It localises to the cytoplasm. The catalysed reaction is (2R)-3-phosphoglycerate + ATP = (2R)-3-phospho-glyceroyl phosphate + ADP. The protein operates within carbohydrate degradation; glycolysis; pyruvate from D-glyceraldehyde 3-phosphate: step 2/5. The polypeptide is Phosphoglycerate kinase (Corynebacterium jeikeium (strain K411)).